The following is a 91-amino-acid chain: Small ribosomal subunit protein bS20 (91 aa).

Positions 72–91 (KNAASRQKSRLAKKLNGLSA) are disordered.

This sequence belongs to the bacterial ribosomal protein bS20 family.

Its function is as follows. Binds directly to 16S ribosomal RNA. This Halalkalibacterium halodurans (strain ATCC BAA-125 / DSM 18197 / FERM 7344 / JCM 9153 / C-125) (Bacillus halodurans) protein is Small ribosomal subunit protein bS20.